We begin with the raw amino-acid sequence, 51 residues long: Insulin (51 aa).

Intrachain disulfides connect Cys7–Cys37, Cys19–Cys50, and Cys36–Cys41.

The protein belongs to the insulin family. As to quaternary structure, heterodimer of a B chain and an A chain linked by two disulfide bonds.

Its subcellular location is the secreted. Insulin decreases blood glucose concentration. It increases cell permeability to monosaccharides, amino acids and fatty acids. It accelerates glycolysis, the pentose phosphate cycle, and glycogen synthesis in liver. The polypeptide is Insulin (INS) (Camelus dromedarius (Dromedary)).